The chain runs to 663 residues: Preterminal protein (663 aa).

Positions 367 to 376 match the Nuclear localization signal motif; sequence SLPLPTRRRR. The tract at residues 374–414 is disordered; the sequence is RRRVARPAPPSPSPSPEPVELEMPPLEGEEEEEEEELPPRS. Residues 380–390 are compositionally biased toward pro residues; it reads PAPPSPSPSPE. Positions 400–409 are enriched in acidic residues; that stretch reads EGEEEEEEEE. The residue at position 575 (Ser575) is an O-(5'-phospho-DNA)-serine. The disordered stretch occupies residues 632–663; the sequence is QLQPMPELNDPVQLPPLRPERQRPPLGPRRPL.

It belongs to the adenoviridae terminal protein family. As to quaternary structure, heterodimer with the polymerase; this heterodimer binds to bp 9 to 18 of the genome. Interacts with host POU2F1; POU2F1 binds to the auxiliary sequences in the inverted terminal repeats and tethers the pTP-POL heterodimer to the origin DNA thereby participating in the assembly of the pre-initiation complex (POL-TP-DBP-NFIA-POU2F1). Preterminal protein is used to replicate viral genome, upon genomic encapsidation it is processed first into iTP and finally into TP by adenovirus protease.

The protein localises to the host nucleus matrix. Protein covalently bound to the viral DNA that acts as a primer for viral genomic replication by DNA strand displacement. Assembles on the viral origin of replication in an initiation complex with viral polymerase, DBP, host NFIA and host POU2F1/OCT1. During initiation, the polymerase covalently couples the first dCTP with Ser-580 of pTP. The terminal protein stimulates the template activity over 20 fold compared to protein-free templates. Neo-synthesized viral genomes are linked to two preterminal proteins, one for each 5' end. These new genomes are encapsidated in the nucleus, and during capsid maturation by viral protease, preterminal protein is first cleaved into intermediary (iTP), then into mature TP. May play a role in host nuclear matrix localization of genomic DNA. The polypeptide is Preterminal protein (Bos taurus (Bovine)).